The following is a 224-amino-acid chain: Envelope glycoprotein L (224 aa).

The N-terminal stretch at 1–16 (MGFVCLFGLVVMGAWG) is a signal peptide. Residues 20–161 (GSQATEYVLR…FDYSRTRRCV (142 aa)) form an interaction with gH region. Residues 23–201 (ATEYVLRSVI…LATQPPVLAL (179 aa)) form the gL alphaherpesvirus-type domain. Intrachain disulfides connect cysteine 44–cysteine 76 and cysteine 149–cysteine 160. The disordered stretch occupies residues 168-224 (PANTTSTWEPPVSSDDEASSQSKPLATQPPVLALSNAPPRRVSPTRGRRRHTRLRRN). A compositionally biased stretch (basic residues) spans 213–224 (RGRRRHTRLRRN).

The protein belongs to the herpesviridae glycoprotein L (gL) family. Alphaherpesvirinae gL subfamily. As to quaternary structure, interacts with glycoprotein H (gH); this interaction is necessary for the correct processing and cell surface expression of gH. The heterodimer gH/gL seems to interact with gB trimers during fusion.

The protein localises to the virion membrane. It localises to the host cell membrane. The protein resides in the host Golgi apparatus. It is found in the host trans-Golgi network. Its function is as follows. The heterodimer glycoprotein H-glycoprotein L is required for the fusion of viral and plasma membranes leading to virus entry into the host cell. Acts as a functional inhibitor of gH and maintains gH in an inhibited form. Upon binding to host integrins, gL dissociates from gH leading to activation of the viral fusion glycoproteins gB and gH. The chain is Envelope glycoprotein L from Homo sapiens (Human).